A 629-amino-acid chain; its full sequence is tRNA uridine 5-carboxymethylaminomethyl modification enzyme MnmG (629 aa).

11–16 serves as a coordination point for FAD; sequence GGGHAG. 273-287 serves as a coordination point for NAD(+); the sequence is GPRYCPSFEDKAVRF.

It belongs to the MnmG family. In terms of assembly, homodimer. Heterotetramer of two MnmE and two MnmG subunits. It depends on FAD as a cofactor.

The protein localises to the cytoplasm. NAD-binding protein involved in the addition of a carboxymethylaminomethyl (cmnm) group at the wobble position (U34) of certain tRNAs, forming tRNA-cmnm(5)s(2)U34. This is tRNA uridine 5-carboxymethylaminomethyl modification enzyme MnmG from Mycoplasma mycoides subsp. mycoides SC (strain CCUG 32753 / NCTC 10114 / PG1).